Here is a 345-residue protein sequence, read N- to C-terminus: UDP-3-O-acylglucosamine N-acyltransferase (345 aa).

The active-site Proton acceptor is the histidine 248.

The protein belongs to the transferase hexapeptide repeat family. LpxD subfamily. As to quaternary structure, homotrimer.

It carries out the reaction a UDP-3-O-[(3R)-3-hydroxyacyl]-alpha-D-glucosamine + a (3R)-hydroxyacyl-[ACP] = a UDP-2-N,3-O-bis[(3R)-3-hydroxyacyl]-alpha-D-glucosamine + holo-[ACP] + H(+). It participates in bacterial outer membrane biogenesis; LPS lipid A biosynthesis. In terms of biological role, catalyzes the N-acylation of UDP-3-O-acylglucosamine using 3-hydroxyacyl-ACP as the acyl donor. Is involved in the biosynthesis of lipid A, a phosphorylated glycolipid that anchors the lipopolysaccharide to the outer membrane of the cell. The chain is UDP-3-O-acylglucosamine N-acyltransferase from Trichodesmium erythraeum (strain IMS101).